Consider the following 53-residue polypeptide: Insulin (53 aa).

Residues 1-30 (DVEPLLGFLSPKSGQENEVDDFPYKGQGEL) constitute a propeptide, c peptide. A disulfide bridge connects residues Cys-38 and Cys-43.

This sequence belongs to the insulin family. In terms of assembly, heterodimer of a B chain and an A chain linked by two disulfide bonds.

The protein localises to the secreted. In terms of biological role, insulin decreases blood glucose concentration. It increases cell permeability to monosaccharides, amino acids and fatty acids. It accelerates glycolysis, the pentose phosphate cycle, and glycogen synthesis in liver. The protein is Insulin (ins) of Anguilla anguilla (European freshwater eel).